The primary structure comprises 303 residues: MRLFNWRRQAALNAMPLVKPDQVRTPWHEFWRRFRRQHMAMTAALFVILLIVVAIFARWIAPYDAENYFDYDNLNNGPSLQHWFGVDSLGRDIFSRVLVGAQISLAAGVFAVFIGAAIGTLLGLLAGYYEGWWDRLIMRICDVLFAFPGILLAIAVVAVLGSGIANVIIAVAIFSIPAFARLVRGNTLVLKQQTFIESARSIGASDMTILLRHILPGTVSSIVVFFTMRIGTSIISAASLSFLGLGAQPPTPEWGAMLNEARADMVIAPHVAVFPALAIFLTVLAFNLLGDGLRDALDPKIKG.

6 helical membrane-spanning segments follow: residues 40 to 60 (AMTA…ARWI), 105 to 125 (LAAG…LGLL), 144 to 164 (LFAF…GSGI), 165 to 185 (ANVI…LVRG), 222 to 242 (IVVF…SLSF), and 266 to 286 (VIAP…VLAF). Residues 101–290 (AQISLAAGVF…LTVLAFNLLG (190 aa)) enclose the ABC transmembrane type-1 domain.

It belongs to the binding-protein-dependent transport system permease family. The complex is composed of two ATP-binding proteins (GsiA), two transmembrane proteins (GsiC and GsiD) and a solute-binding protein (GsiB).

It localises to the cell inner membrane. In terms of biological role, part of the ABC transporter complex GsiABCD involved in glutathione import. Probably responsible for the translocation of the substrate across the membrane. This chain is Glutathione transport system permease protein GsiD, found in Escherichia coli O6:K15:H31 (strain 536 / UPEC).